A 225-amino-acid polypeptide reads, in one-letter code: LysM and putative peptidoglycan-binding domain-containing protein 1 (225 aa).

Residues S23 and S33 each carry the phosphoserine modification. The region spanning 40-84 (LEHQLAPGDTLAGLALKYGVTMEQIKRANRLYTNDSIFLKKTLHI) is the LysM domain. The tract at residues 97–153 (LDSEEEKDGEEAVQPSKDEVRPHSAERKKRERGLGHANGEPLPTAGQEPARHDLSAS) is disordered. Positions 98-107 (DSEEEKDGEE) are enriched in acidic residues. A Phosphoserine modification is found at S99. Residues 112–121 (SKDEVRPHSA) are compositionally biased toward basic and acidic residues. A phosphoserine mark is found at S164, S179, S192, and S210. Residues 170–225 (AAQKLKKGESGIPGEDSSLHLSSPRMQQRAVLGPVPLTQTSRTRTLRDQEDEIFKL) form a disordered region. Residues 214–225 (TLRDQEDEIFKL) are compositionally biased toward basic and acidic residues.

The chain is LysM and putative peptidoglycan-binding domain-containing protein 1 (LYSMD1) from Bos taurus (Bovine).